A 469-amino-acid chain; its full sequence is Trigger factor (469 aa).

Residues 165 to 250 enclose the PPIase FKBP-type domain; it reads GDCVTIDYLG…VKAISKPDEL (86 aa). Residues 439-460 are compositionally biased toward basic and acidic residues; the sequence is EYDESDLTEKKPEKKKGVEKTP. The tract at residues 439–469 is disordered; the sequence is EYDESDLTEKKPEKKKGVEKTPIRKKAPKKG.

The protein belongs to the FKBP-type PPIase family. Tig subfamily.

It is found in the cytoplasm. The catalysed reaction is [protein]-peptidylproline (omega=180) = [protein]-peptidylproline (omega=0). Involved in protein export. Acts as a chaperone by maintaining the newly synthesized protein in an open conformation. Functions as a peptidyl-prolyl cis-trans isomerase. This chain is Trigger factor, found in Bartonella quintana (strain Toulouse) (Rochalimaea quintana).